Reading from the N-terminus, the 778-residue chain is Ubiquitin thioesterase trabid (778 aa).

2 consecutive RanBP2-type zinc fingers follow at residues 5–36 (KDDA…SKPL) and 89–118 (DSEK…KRGG). Residues 187–197 (ASHNQSQSQHR) show a composition bias toward polar residues. The interval 187 to 226 (ASHNQSQSQHRQPVLQQQMQLQLQPQQQRESSSSAAVPPQ) is disordered. Residues 198–226 (QPVLQQQMQLQLQPQQQRESSSSAAVPPQ) are compositionally biased toward low complexity. A RanBP2-type 3 zinc finger spans residues 232–261 (YVSKWACNSCTYENWPRSIKCSMCGKTRER). Positions 265 to 290 (GSQNDLHASSSLNSQEENQQQLQQPN) are disordered. A compositionally biased stretch (low complexity) spans 273–288 (SSSLNSQEENQQQLQQ). Residues 507–665 (MFVLWNRSAG…RGHFSALVPM (159 aa)) enclose the OTU domain. The active-site Nucleophile is Cys518. The active-site Proton acceptor is His658. Phosphoserine occurs at positions 770, 771, and 775.

The protein belongs to the peptidase C64 family. Interacts with Apc.

The catalysed reaction is Thiol-dependent hydrolysis of ester, thioester, amide, peptide and isopeptide bonds formed by the C-terminal Gly of ubiquitin (a 76-residue protein attached to proteins as an intracellular targeting signal).. Functionally, positive regulator of the Wnt signaling pathway. Specifically cleaves 'Lys-63'-linked ubiquitin chains. May act by deubiquitinating APC protein, a negative regulator of Wnt-mediated transcription. Required for an efficient wg response, but not for other signaling responses, in the eye. This Drosophila melanogaster (Fruit fly) protein is Ubiquitin thioesterase trabid (trbd).